The chain runs to 190 residues: Nucleoside triphosphate pyrophosphatase (190 aa).

Aspartate 69 serves as the catalytic Proton acceptor.

The protein belongs to the Maf family. A divalent metal cation serves as cofactor.

The protein localises to the cytoplasm. The enzyme catalyses a ribonucleoside 5'-triphosphate + H2O = a ribonucleoside 5'-phosphate + diphosphate + H(+). It carries out the reaction a 2'-deoxyribonucleoside 5'-triphosphate + H2O = a 2'-deoxyribonucleoside 5'-phosphate + diphosphate + H(+). In terms of biological role, nucleoside triphosphate pyrophosphatase. May have a dual role in cell division arrest and in preventing the incorporation of modified nucleotides into cellular nucleic acids. The chain is Nucleoside triphosphate pyrophosphatase from Helicobacter pylori (strain G27).